A 173-amino-acid chain; its full sequence is Superoxide dismutase [Cu-Zn] 2 (173 aa).

The signal sequence occupies residues 1–19 (MKRLSLAMVTLLACAGAQA). Cu cation contacts are provided by His-67, His-69, and His-92. Cys-74 and Cys-169 are disulfide-bonded. Positions 92, 101, 109, and 112 each coordinate Zn(2+). His-147 contributes to the Cu cation binding site.

Belongs to the Cu-Zn superoxide dismutase family. As to quaternary structure, monomer. Cu cation serves as cofactor. Requires Zn(2+) as cofactor.

It is found in the periplasm. The enzyme catalyses 2 superoxide + 2 H(+) = H2O2 + O2. Its function is as follows. Destroys radicals which are normally produced within the cells and which are toxic to biological systems. In Salmonella typhimurium (strain LT2 / SGSC1412 / ATCC 700720), this protein is Superoxide dismutase [Cu-Zn] 2 (sodC).